A 25-amino-acid chain; its full sequence is Oxyopinin-3c (25 aa).

In terms of tissue distribution, expressed by the venom gland.

The protein localises to the secreted. Functionally, may have cytolytic and antimicrobial activity. The polypeptide is Oxyopinin-3c (Oxyopes takobius (Lynx spider)).